Consider the following 490-residue polypeptide: Alginate production protein AlgE (490 aa).

The first 32 residues, 1-32 (MNSSRSVNPRPSFAPRALSLAIALLLGAPAFA), serve as a signal peptide directing secretion. Composition is skewed to polar residues over residues 102 to 115 (DTLQ…NNSR) and 343 to 355 (QFQQ…NRSN). Disordered stretches follow at residues 102–121 (DTLQ…GREP) and 331–355 (ARGS…NRSN).

Belongs to the AlgE family.

The protein localises to the cell outer membrane. The protein operates within glycan biosynthesis; alginate biosynthesis. Its function is as follows. Has non-porin-like, channel-forming properties and probably functions as an alginate permeability pore. This chain is Alginate production protein AlgE (algE), found in Pseudomonas aeruginosa (strain ATCC 15692 / DSM 22644 / CIP 104116 / JCM 14847 / LMG 12228 / 1C / PRS 101 / PAO1).